The chain runs to 560 residues: Probable sulfate transporter Rv1739c (560 aa).

Residues 1–436 form a required for sulfate transport in E.coli region; sequence MIPTMTSAGW…VLGFVPGIAG (436 aa). The next 11 membrane-spanning stretches (helical) occupy residues 29-49, 51-71, 79-99, 105-125, 138-158, 184-204, 207-227, 256-276, 333-353, 355-375, and 394-414; these read VLAG…YATV, GLPP…YALL, IGPE…MAAG, AVLA…AGTA, VLVG…LGTI, WPTF…TRWA, APGP…MSLD, ALII…VLTA, LIAL…LAMF, IAAL…LSEF, and AAVL…LSIL. Positions 442–557 constitute an STAS domain; that stretch reads DYPQAKRVPG…MTLPTAVQAF (116 aa).

This sequence belongs to the SLC26A/SulP transporter (TC 2.A.53) family.

The protein resides in the cell membrane. Its function is as follows. Expression in E.coli induces sulfate uptake during early- to mid-log phase growth. Uptake is maximal at pH 6.0, is sulfate-specific, requires E.coli CysA and the transmembrane segment but not the STAS domain of the protein. The chain is Probable sulfate transporter Rv1739c from Mycobacterium tuberculosis (strain ATCC 25618 / H37Rv).